Here is a 447-residue protein sequence, read N- to C-terminus: Na(+)-translocating NADH-quinone reductase subunit A (447 aa).

The protein belongs to the NqrA family. As to quaternary structure, composed of six subunits; NqrA, NqrB, NqrC, NqrD, NqrE and NqrF.

It carries out the reaction a ubiquinone + n Na(+)(in) + NADH + H(+) = a ubiquinol + n Na(+)(out) + NAD(+). In terms of biological role, NQR complex catalyzes the reduction of ubiquinone-1 to ubiquinol by two successive reactions, coupled with the transport of Na(+) ions from the cytoplasm to the periplasm. NqrA to NqrE are probably involved in the second step, the conversion of ubisemiquinone to ubiquinol. This Haemophilus influenzae (strain PittEE) protein is Na(+)-translocating NADH-quinone reductase subunit A.